Reading from the N-terminus, the 122-residue chain is Ribosome-binding factor A (122 aa).

It belongs to the RbfA family. Monomer. Binds 30S ribosomal subunits, but not 50S ribosomal subunits or 70S ribosomes.

It is found in the cytoplasm. Its function is as follows. One of several proteins that assist in the late maturation steps of the functional core of the 30S ribosomal subunit. Associates with free 30S ribosomal subunits (but not with 30S subunits that are part of 70S ribosomes or polysomes). Required for efficient processing of 16S rRNA. May interact with the 5'-terminal helix region of 16S rRNA. The protein is Ribosome-binding factor A of Polaromonas naphthalenivorans (strain CJ2).